A 736-amino-acid polypeptide reads, in one-letter code: Poly(A) polymerase gamma (736 aa).

Position 2 is an N6-acetyllysine (K2). Residues S23 and S29 each carry the phosphoserine modification. ATP-binding positions include 99 to 101 (FGS), T108, 112 to 114 (DID), D166, K227, Y236, and 245 to 246 (GV). Mg(2+) is bound by residues D112, D114, and D166. Residues 506 to 564 (KQSLSDVNRSSGGLQSKRLSLDSSCLDSSRDTDNGTPFNSPASKSDSPSVGETERNSAE) form a disordered region. A compositionally biased stretch (polar residues) spans 509-519 (LSDVNRSSGGL). Residues 521 to 532 (SKRLSLDSSCLD) show a composition bias toward low complexity. A Phosphoserine modification is found at S525. Polar residues predominate over residues 539-555 (NGTPFNSPASKSDSPSV). 2 positions are modified to phosphoserine: S599 and S648. A Phosphothreonine modification is found at T654. Basic and acidic residues predominate over residues 673-685 (DPRTAEERKRKSV). Positions 673–720 (DPRTAEERKRKSVDAIGGESMPIPTIDTSRKKRLPSKELPDSSSPVPA) are disordered. 2 positions are modified to phosphoserine: S684 and S708.

The protein belongs to the poly(A) polymerase family. Mg(2+) is required as a cofactor. Requires Mn(2+) as cofactor. In terms of tissue distribution, expressed predominantly in testis, and weakly in other tissues. Overexpressed in several tumors.

The protein resides in the nucleus. The enzyme catalyses RNA(n) + ATP = RNA(n)-3'-adenine ribonucleotide + diphosphate. Functionally, responsible for the post-transcriptional adenylation of the 3'-terminal of mRNA precursors and several small RNAs including signal recognition particle (SRP) RNA, nuclear 7SK RNA, U2 small nuclear RNA, and ribosomal 5S RNA. In Homo sapiens (Human), this protein is Poly(A) polymerase gamma.